The following is a 462-amino-acid chain: Putative endoglucanase type B (462 aa).

Residues 1–16 form the signal peptide; that stretch reads MAYKLILAAFAATALA. The CBM1 domain maps to 25-61; the sequence is CSNGVWAQCGGQNWSGTPCCTSGNKCVKLNDFYSQCQ. Disulfide bonds link Cys33–Cys50 and Cys44–Cys60. An N-linked (GlcNAc...) asparagine glycan is attached at Asn37. A compositionally biased stretch (low complexity) spans 64–100; sequence SAEPSSTAAGPSSTTATKTTATGGSSTTAGGSVTSAP. The segment at 64–102 is disordered; it reads SAEPSSTAAGPSSTTATKTTATGGSSTTAGGSVTSAPPA. The linker stretch occupies residues 66-99; sequence EPSSTAAGPSSTTATKTTATGGSSTTAGGSVTSA. The tract at residues 100 to 462 is catalytic; that stretch reads PPAASDNPYA…LLDNANPSFL (363 aa). Residue Asp190 is part of the active site. Cys191 and Cys250 are joined by a disulfide. N-linked (GlcNAc...) asparagine glycosylation occurs at Asn223. The Proton donor role is filled by Asp236. Residues Asn272 and Asn317 are each glycosylated (N-linked (GlcNAc...) asparagine). Cys383 and Cys430 form a disulfide bridge. The Nucleophile role is filled by Asp416.

This sequence belongs to the glycosyl hydrolase 6 (cellulase B) family.

It carries out the reaction Endohydrolysis of (1-&gt;4)-beta-D-glucosidic linkages in cellulose, lichenin and cereal beta-D-glucans.. The chain is Putative endoglucanase type B from Fusarium oxysporum (Fusarium vascular wilt).